A 414-amino-acid chain; its full sequence is Tryptophan synthase beta chain (414 aa).

Basic and acidic residues predominate over residues 1–12; the sequence is MVSTISRHDQNK. A disordered region spans residues 1–23; that stretch reads MVSTISRHDQNKNNDYLNQPSKE. N6-(pyridoxal phosphate)lysine is present on K109.

It belongs to the TrpB family. As to quaternary structure, tetramer of two alpha and two beta chains. Pyridoxal 5'-phosphate is required as a cofactor.

It catalyses the reaction (1S,2R)-1-C-(indol-3-yl)glycerol 3-phosphate + L-serine = D-glyceraldehyde 3-phosphate + L-tryptophan + H2O. It participates in amino-acid biosynthesis; L-tryptophan biosynthesis; L-tryptophan from chorismate: step 5/5. In terms of biological role, the beta subunit is responsible for the synthesis of L-tryptophan from indole and L-serine. In Prochlorococcus marinus (strain MIT 9515), this protein is Tryptophan synthase beta chain.